Reading from the N-terminus, the 482-residue chain is Proton extrusion protein PxcA (482 aa).

Transmembrane regions (helical) follow at residues 265–285 (FVLGLMIVPLLTQQVSKNLVI), 359–379 (PLKNAISDLFSLVALAIYFVL), 406–426 (IIILFTDVFVGFHSPHGWEVI), and 442–462 (FINMFIATFPVMLDTVFKYWI).

The protein belongs to the CemA family.

It localises to the cell inner membrane. Its function is as follows. Required for H(+) efflux immediately after light irradiation to form a rapid H(+) concentration gradient across the thylakoid membranes. Together with PxcL, contributes to transient H(+) uptake following dark to light transition. The sequence is that of Proton extrusion protein PxcA from Acaryochloris marina (strain MBIC 11017).